We begin with the raw amino-acid sequence, 167 residues long: Ribosome maturation factor RimM (167 aa).

In terms of domain architecture, PRC barrel spans 94-167; that stretch reads EENEYFIKDL…VMVVHLLEGL (74 aa).

The protein belongs to the RimM family. Binds ribosomal protein uS19.

Its subcellular location is the cytoplasm. In terms of biological role, an accessory protein needed during the final step in the assembly of 30S ribosomal subunit, possibly for assembly of the head region. Essential for efficient processing of 16S rRNA. May be needed both before and after RbfA during the maturation of 16S rRNA. It has affinity for free ribosomal 30S subunits but not for 70S ribosomes. The chain is Ribosome maturation factor RimM from Thermoanaerobacter pseudethanolicus (strain ATCC 33223 / 39E) (Clostridium thermohydrosulfuricum).